The primary structure comprises 71 residues: Brevinin-1CG4 (71 aa).

Positions 1-22 are cleaved as a signal peptide; sequence MFTLKKSLLLLFFLGTINLSLC. The propeptide at 23–45 is removed in mature form; the sequence is EQERNADEEERRDDSDKRDVEVE. A disulfide bridge connects residues Cys-65 and Cys-71.

This sequence belongs to the frog skin active peptide (FSAP) family. Brevinin subfamily. In terms of tissue distribution, expressed by the skin glands.

It localises to the secreted. Antimicrobial peptide active against a variety of Gram-positive and some Gram-negative bacterial strains. Has antifungal activity against C.albicans ATCC 10231 and a slime mold isolate. Has hemolytic activity against human erythrocytes. This Amolops chunganensis (Chungan torrent frog) protein is Brevinin-1CG4.